Reading from the N-terminus, the 101-residue chain is NADH-quinone oxidoreductase subunit K (101 aa).

A run of 3 helical transmembrane segments spans residues 4–24 (LSHY…GIFL), 30–50 (IILL…FVAF), and 61–81 (IFVF…LAIL).

This sequence belongs to the complex I subunit 4L family. In terms of assembly, NDH-1 is composed of 14 different subunits. Subunits NuoA, H, J, K, L, M, N constitute the membrane sector of the complex.

It localises to the cell inner membrane. It carries out the reaction a quinone + NADH + 5 H(+)(in) = a quinol + NAD(+) + 4 H(+)(out). In terms of biological role, NDH-1 shuttles electrons from NADH, via FMN and iron-sulfur (Fe-S) centers, to quinones in the respiratory chain. The immediate electron acceptor for the enzyme in this species is believed to be ubiquinone. Couples the redox reaction to proton translocation (for every two electrons transferred, four hydrogen ions are translocated across the cytoplasmic membrane), and thus conserves the redox energy in a proton gradient. This chain is NADH-quinone oxidoreductase subunit K, found in Nitrosomonas eutropha (strain DSM 101675 / C91 / Nm57).